We begin with the raw amino-acid sequence, 350 residues long: S-adenosylmethionine:tRNA ribosyltransferase-isomerase (350 aa).

The protein belongs to the QueA family. In terms of assembly, monomer.

It localises to the cytoplasm. It carries out the reaction 7-aminomethyl-7-carbaguanosine(34) in tRNA + S-adenosyl-L-methionine = epoxyqueuosine(34) in tRNA + adenine + L-methionine + 2 H(+). Its pathway is tRNA modification; tRNA-queuosine biosynthesis. Its function is as follows. Transfers and isomerizes the ribose moiety from AdoMet to the 7-aminomethyl group of 7-deazaguanine (preQ1-tRNA) to give epoxyqueuosine (oQ-tRNA). In Bacillus thuringiensis subsp. konkukian (strain 97-27), this protein is S-adenosylmethionine:tRNA ribosyltransferase-isomerase.